A 354-amino-acid polypeptide reads, in one-letter code: Nicotinate-nucleotide--dimethylbenzimidazole phosphoribosyltransferase (354 aa).

Residue E313 is the Proton acceptor of the active site.

Belongs to the CobT family.

The catalysed reaction is 5,6-dimethylbenzimidazole + nicotinate beta-D-ribonucleotide = alpha-ribazole 5'-phosphate + nicotinate + H(+). Its pathway is nucleoside biosynthesis; alpha-ribazole biosynthesis; alpha-ribazole from 5,6-dimethylbenzimidazole: step 1/2. Catalyzes the synthesis of alpha-ribazole-5'-phosphate from nicotinate mononucleotide (NAMN) and 5,6-dimethylbenzimidazole (DMB). The polypeptide is Nicotinate-nucleotide--dimethylbenzimidazole phosphoribosyltransferase (Ralstonia nicotianae (strain ATCC BAA-1114 / GMI1000) (Ralstonia solanacearum)).